We begin with the raw amino-acid sequence, 381 residues long: D-rhamnosyltransferase WbpZ (381 aa).

Positions 19, 116, 206, and 252 each coordinate substrate.

It belongs to the glycosyltransferase group 1 family. Glycosyltransferase 4 subfamily.

The protein localises to the cytoplasm. The enzyme catalyses GDP-alpha-D-rhamnose + N-acetyl-alpha-D-glucosaminyl-di-trans,octa-cis-undecaprenyl diphosphate = alpha-D-rhamnosyl-(1-&gt;3)-N-acetyl-alpha-D-glucosaminyl-1-diphospho-di-trans,octa-cis-undecaprenol + GDP + H(+). It carries out the reaction GDP-alpha-D-rhamnose + N-acetyl-alpha-D-galactosaminyl-di-trans,octa-cis-undecaprenyl diphosphate = alpha-D-rhamnosyl-(1-&gt;3)-N-acetyl-alpha-D-galactosaminyl-1-diphospho-di-trans,octa-cis-undecaprenol + GDP + H(+). The catalysed reaction is N-acetyl-alpha-D-glucosaminyl-di-trans,octa-cis-undecaprenyl diphosphate + GDP-alpha-D-mannose = alpha-D-mannosyl-(1-&gt;3)-N-acetyl-alpha-D-glucosaminyl-di-trans,octa-cis-undecaprenyl diphosphate + GDP + H(+). It catalyses the reaction N-acetyl-alpha-D-galactosaminyl-di-trans,octa-cis-undecaprenyl diphosphate + GDP-alpha-D-mannose = alpha-D-mannosyl-(1-&gt;3)-N-acetyl-alpha-D-galctosaminyl-1-diphospho-di-trans,octa-cis-undecaprenol + GDP + H(+). It functions in the pathway lipopolysaccharide biosynthesis; LPS oligosaccharide biosynthesis. Its activity is regulated as follows. Not activated by dithiothreitol (DTT) using GlcNAc-alpha-PO(3)-PO(3)-phenylundecyl (GlcNAc-PP-PhU) as acceptor substrate. 0.25% Triton X-100 and 0.125% NP-40 increases the activity 2.5-fold and 2-fold, respectively. 0.125% octyl glucoside has little effect on activity. Slightly increased activity with Mg(2+) and Pb(2+), while no effect with Mn(2+), Co(2+), Ni(2+), Cu(2+), Zn(2+), Ca(2+) or EDTA. Not inhibited by N-butyryl-galactosamine-alpha-benzyl or N-butyryl-glucosamine-beta-benzyl. Bis-imidazolium salts having aliphatic spacer groups with 4 or 6 carbons have little effect on activity, but spacer groups of 18-22 aliphatic carbons inhibit activity, with the most potent inhibitor being bis-imidazolium salt having a 20-carbon chain spacer length. Non-processive alpha-1,3-D-rhamnosyltransferase. Catalyzes the transfer of one D-rhamnose (D-Rha) residue from donor substrate GDP-D-Rha in alpha-1-3 linkage to both GlcNAc- and GalNAc-diphosphate-lipid acceptor substrates. Is also able to transfer D-mannose (D-Man) to these acceptors at a lower level. Nucleotide sugars GDP-D-Rha, GDP-Fuc, UDP-Gal, UDP-GalNAc, UDP-GlcNAc and CMP-sialic acid cannot act as donor substrates. Only compounds with a diphosphate as the aglycone group can act as acceptor substrates. No activity is detected with compounds containing a diphosphate mimic. Fluorescent undecyl-anthracenyl group-containing compounds, such as GlcNAc-PO(3)-PO(3)-AnthrU and GalNAc-PO(3)-PO(3)-AnthrU, are also good acceptor substrates. Involved in the biosynthesis of the common polysaccharide antigen (CPA), also called A band, which is one of the two major cell surface O-antigens of the P.aeruginosa lipopolysaccharide. Involved in susceptibility to antibiotic colistin. This chain is D-rhamnosyltransferase WbpZ, found in Pseudomonas aeruginosa (strain ATCC 15692 / DSM 22644 / CIP 104116 / JCM 14847 / LMG 12228 / 1C / PRS 101 / PAO1).